Consider the following 341-residue polypeptide: Ketol-acid reductoisomerase (NADP(+)) (341 aa).

Residues 3–184 enclose the KARI N-terminal Rossmann domain; sequence LKVYYDKDCD…GGGRSGIIET (182 aa). NADP(+) is bound by residues 26–29, S54, and 84–87; these read FGSQ and DELQ. The active site involves H109. G135 is an NADP(+) binding site. The KARI C-terminal knotted domain maps to 185 to 330; the sequence is TFKDETETDL…GRLRAMMPWI (146 aa). Mg(2+) is bound by residues D193, E197, E229, and E233. Position 254 (S254) interacts with substrate.

The protein belongs to the ketol-acid reductoisomerase family. It depends on Mg(2+) as a cofactor.

The catalysed reaction is (2R)-2,3-dihydroxy-3-methylbutanoate + NADP(+) = (2S)-2-acetolactate + NADPH + H(+). It carries out the reaction (2R,3R)-2,3-dihydroxy-3-methylpentanoate + NADP(+) = (S)-2-ethyl-2-hydroxy-3-oxobutanoate + NADPH + H(+). Its pathway is amino-acid biosynthesis; L-isoleucine biosynthesis; L-isoleucine from 2-oxobutanoate: step 2/4. It participates in amino-acid biosynthesis; L-valine biosynthesis; L-valine from pyruvate: step 2/4. In terms of biological role, involved in the biosynthesis of branched-chain amino acids (BCAA). Catalyzes an alkyl-migration followed by a ketol-acid reduction of (S)-2-acetolactate (S2AL) to yield (R)-2,3-dihydroxy-isovalerate. In the isomerase reaction, S2AL is rearranged via a Mg-dependent methyl migration to produce 3-hydroxy-3-methyl-2-ketobutyrate (HMKB). In the reductase reaction, this 2-ketoacid undergoes a metal-dependent reduction by NADPH to yield (R)-2,3-dihydroxy-isovalerate. In Helicobacter hepaticus (strain ATCC 51449 / 3B1), this protein is Ketol-acid reductoisomerase (NADP(+)).